The sequence spans 546 residues: Membrane protein insertase YidC (546 aa).

Residues 6 to 26 traverse the membrane as a helical segment; that stretch reads NLLLIALLFVSFMIWQAWQVD. Positions 30–44 are enriched in low complexity; the sequence is QPTAQTTQQTTNTAT. The disordered stretch occupies residues 30–55; it reads QPTAQTTQQTTNTATGDKASQAVPGS. 4 helical membrane-spanning segments follow: residues 344–364, 419–439, 457–477, and 498–518; these read KFIH…TFIV, LGGC…YYML, LSAQ…MYFI, and PVIF…YYIV.

The protein belongs to the OXA1/ALB3/YidC family. Type 1 subfamily. In terms of assembly, interacts with the Sec translocase complex via SecD. Specifically interacts with transmembrane segments of nascent integral membrane proteins during membrane integration.

It is found in the cell inner membrane. Functionally, required for the insertion and/or proper folding and/or complex formation of integral membrane proteins into the membrane. Involved in integration of membrane proteins that insert both dependently and independently of the Sec translocase complex, as well as at least some lipoproteins. Aids folding of multispanning membrane proteins. This Yersinia pestis protein is Membrane protein insertase YidC.